We begin with the raw amino-acid sequence, 588 residues long: Aspartate--tRNA ligase (588 aa).

E172 contributes to the L-aspartate binding site. The tract at residues 196–199 is aspartate; the sequence is QLFK. Residue R218 coordinates L-aspartate. ATP contacts are provided by residues 218 to 220 and Q227; that span reads RDE. H449 contacts L-aspartate. E483 provides a ligand contact to ATP. R490 provides a ligand contact to L-aspartate. 535 to 538 is an ATP binding site; it reads GLDR.

It belongs to the class-II aminoacyl-tRNA synthetase family. Type 1 subfamily. As to quaternary structure, homodimer.

Its subcellular location is the cytoplasm. It catalyses the reaction tRNA(Asp) + L-aspartate + ATP = L-aspartyl-tRNA(Asp) + AMP + diphosphate. Its function is as follows. Catalyzes the attachment of L-aspartate to tRNA(Asp) in a two-step reaction: L-aspartate is first activated by ATP to form Asp-AMP and then transferred to the acceptor end of tRNA(Asp). This Haemophilus influenzae (strain ATCC 51907 / DSM 11121 / KW20 / Rd) protein is Aspartate--tRNA ligase.